The primary structure comprises 164 residues: Peptide deformylase (164 aa).

The Fe cation site is built by Cys-87 and His-129. Glu-130 is an active-site residue. Fe cation is bound at residue His-133.

It belongs to the polypeptide deformylase family. Fe(2+) is required as a cofactor.

It catalyses the reaction N-terminal N-formyl-L-methionyl-[peptide] + H2O = N-terminal L-methionyl-[peptide] + formate. In terms of biological role, removes the formyl group from the N-terminal Met of newly synthesized proteins. Requires at least a dipeptide for an efficient rate of reaction. N-terminal L-methionine is a prerequisite for activity but the enzyme has broad specificity at other positions. The polypeptide is Peptide deformylase (Thermotoga neapolitana (strain ATCC 49049 / DSM 4359 / NBRC 107923 / NS-E)).